A 390-amino-acid polypeptide reads, in one-letter code: L-rhamnonate dehydratase (390 aa).

Substrate contacts are provided by H19 and R45. Mg(2+) is bound by residues D211, E237, and E265. H315 (proton acceptor) is an active-site residue. E335 is a substrate binding site.

The protein belongs to the mandelate racemase/muconate lactonizing enzyme family. RhamD subfamily. It depends on Mg(2+) as a cofactor.

The enzyme catalyses L-rhamnonate = 2-dehydro-3-deoxy-L-rhamnonate + H2O. Catalyzes the dehydration of L-rhamnonate to 2-keto-3-deoxy-L-rhamnonate (KDR). This Saccharopolyspora erythraea (strain ATCC 11635 / DSM 40517 / JCM 4748 / NBRC 13426 / NCIMB 8594 / NRRL 2338) protein is L-rhamnonate dehydratase.